The following is a 396-amino-acid chain: Argininosuccinate synthase (396 aa).

Alanine 9–serine 17 provides a ligand contact to ATP. Tyrosine 85 provides a ligand contact to L-citrulline. ATP is bound at residue glycine 115. L-aspartate contacts are provided by threonine 117, asparagine 121, and aspartate 122. Residue asparagine 121 participates in L-citrulline binding. Positions 125, 173, 258, and 270 each coordinate L-citrulline.

Belongs to the argininosuccinate synthase family. Type 1 subfamily. As to quaternary structure, homotetramer.

The protein resides in the cytoplasm. The catalysed reaction is L-citrulline + L-aspartate + ATP = 2-(N(omega)-L-arginino)succinate + AMP + diphosphate + H(+). It participates in amino-acid biosynthesis; L-arginine biosynthesis; L-arginine from L-ornithine and carbamoyl phosphate: step 2/3. In Streptococcus agalactiae serotype III (strain NEM316), this protein is Argininosuccinate synthase.